Consider the following 500-residue polypeptide: Proline/betaine transporter (500 aa).

Topologically, residues 1 to 37 are cytoplasmic; the sequence is MLKRKKVKPITLRDVTIIDDGKLRKAITAASLGNAME. Residues 38-58 form a helical membrane-spanning segment; sequence WFDFGVYGFVAYALGKVFFPG. Topologically, residues 59-65 are periplasmic; it reads ADPSVQM. A helical membrane pass occupies residues 66–86; the sequence is VAALATFSVPFLIRPLGGLFF. Residues 87-97 are Cytoplasmic-facing; that stretch reads GMLGDKYGRQK. A helical transmembrane segment spans residues 98-118; the sequence is ILAITIVIMSISTFCIGLIPS. At 119 to 121 the chain is on the periplasmic side; that stretch reads YDT. The chain crosses the membrane as a helical span at residues 122 to 142; the sequence is IGIWAPILLLICKMAQGFSVG. Residues 143–169 are Cytoplasmic-facing; sequence GEYTGASIFVAEYSPDRKRGFMGSWLD. Residues 170-190 traverse the membrane as a helical segment; the sequence is FGSIAGFVLGAGVVVLISTIV. Over 191 to 194 the chain is Periplasmic; the sequence is GEAN. The helical transmembrane segment at 195–215 threads the bilayer; that stretch reads FLDWGWRIPFFIALPLGIIGL. Residues 216 to 260 are Cytoplasmic-facing; sequence YLRHALEETPAFQQHVDKLEQGDREGLQDGPKVSFKEIATKYWRS. A helical transmembrane segment spans residues 261–281; the sequence is LLTCIGLVIATNVTYYMLLTY. The Periplasmic segment spans residues 282-297; that stretch reads MPSYLSHNLHYSEDHG. The helical transmembrane segment at 298–318 threads the bilayer; the sequence is VLIIIAIMIGMLFVQPVMGLL. Over 319–325 the chain is Cytoplasmic; the sequence is SDRFGRR. The chain crosses the membrane as a helical span at residues 326–346; the sequence is PFVLLGSVALFVLAIPAFILI. At 347-350 the chain is on the periplasmic side; it reads NSNV. The helical transmembrane segment at 351-371 threads the bilayer; it reads IGLIFAGLLMLAVILNCFTGV. At 372–390 the chain is on the cytoplasmic side; that stretch reads MASTLPAMFPTHIRYSALA. The helical transmembrane segment at 391–411 threads the bilayer; sequence AAFNISVLVAGLTPTLAAWLV. The Periplasmic portion of the chain corresponds to 412–416; sequence ESSQN. Residues 417–437 form a helical membrane-spanning segment; it reads LMMPAYYLMVVAVVGLITGVT. Residues 438-500 lie on the Cytoplasmic side of the membrane; the sequence is MKETANRPLK…LVQQHPRIDE (63 aa). Positions 453-498 form a coiled coil; sequence ASDIQEAKEILVEHYDNIEQKIDDIDHEIADLQAKRTRLVQQHPRI.

Belongs to the major facilitator superfamily. Metabolite:H+ Symporter (MHS) family (TC 2.A.1.6) family.

It localises to the cell inner membrane. Functionally, proton symporter that senses osmotic shifts and responds by importing osmolytes such as proline, glycine betaine, stachydrine, pipecolic acid, ectoine and taurine. It is both an osmosensor and an osmoregulator which is available to participate early in the bacterial osmoregulatory response. The polypeptide is Proline/betaine transporter (proP) (Escherichia coli O157:H7).